Consider the following 298-residue polypeptide: MSATGPGIVVIDKPAGMTSHDVVGRCRRIFATRRVGHAGTLDPMATGVLVIGIERATKILGLLTAAPKSYAATIRLGQTTSTEDAEGQVLQSVPAKHLTIEAIDAAMERLRGEIRQVPSSVSAIKVGGRRAYRLARQGRSVQLEARPIRIDRFELLAARRRDQLIDIDVEIDCSSGTYIRALARDLGDALGVGGHVTALRRTRVGRFELDQARSLDDLAERPALSLSLDEACLLMFARRDLTAAEASAAANGRSLPAVGIDGVYAACDADGRVIALLRDEGSRTRSVAVLRPATMHPG.

Catalysis depends on D42, which acts as the Nucleophile.

Belongs to the pseudouridine synthase TruB family. Type 1 subfamily.

It carries out the reaction uridine(55) in tRNA = pseudouridine(55) in tRNA. In terms of biological role, responsible for synthesis of pseudouridine from uracil-55 in the psi GC loop of transfer RNAs. In Mycobacterium tuberculosis (strain CDC 1551 / Oshkosh), this protein is tRNA pseudouridine synthase B.